Reading from the N-terminus, the 467-residue chain is Glutamate--tRNA ligase (467 aa).

The 'HIGH' region motif lies at 9 to 19; the sequence is PSPTGYLHIGG. The 'KMSKS' region motif lies at 237 to 241; it reads KLSKR. Lysine 240 provides a ligand contact to ATP.

This sequence belongs to the class-I aminoacyl-tRNA synthetase family. Glutamate--tRNA ligase type 1 subfamily. Monomer.

The protein localises to the cytoplasm. It carries out the reaction tRNA(Glu) + L-glutamate + ATP = L-glutamyl-tRNA(Glu) + AMP + diphosphate. Its function is as follows. Catalyzes the attachment of glutamate to tRNA(Glu) in a two-step reaction: glutamate is first activated by ATP to form Glu-AMP and then transferred to the acceptor end of tRNA(Glu). This Xanthomonas campestris pv. campestris (strain 8004) protein is Glutamate--tRNA ligase.